A 265-amino-acid chain; its full sequence is Capsule polysaccharide export inner-membrane protein CtrC (265 aa).

Helical transmembrane passes span 37–57 (IGFL…VLMW), 67–84 (TLNI…LMMW), 121–141 (IAGA…IGWI), 148–168 (FYML…GLVI), 178–198 (FGKI…AFFF), and 238–258 (WYIV…VSKF). Residues 37-258 (IGFLWLFVEP…LFGLAMVSKF (222 aa)) enclose the ABC transmembrane type-2 domain.

It belongs to the ABC-2 integral membrane protein family.

Its subcellular location is the cell inner membrane. In terms of biological role, may form an ATP-driven capsule polysaccharide export apparatus, in association with the CtrB and CtrD proteins. The protein is Capsule polysaccharide export inner-membrane protein CtrC (ctrC) of Neisseria meningitidis serogroup B (strain ATCC BAA-335 / MC58).